The following is a 253-amino-acid chain: MRLKGVLALFSFFTAIPIKSNASLEEIAEYSYISPLIIGISLALIESAVYVLLYRILEALAGIVLLGVVELLRGFNHLDGLLDLGDALMIKGDRERKIKALKDVEIGSGGIGLLLVYLSIQIVALLKLGFSFYTIFYLISSNVLSMTIGLYILSTISPIPESNLGKIFHNKLKGKSTVLLFELIPFISLYNIIVFLVFYMIMHKICRSLGGSSGDIAGASITLSFPLFLLTNEITNLNYSLLSILCYLFLYLH.

Transmembrane regions (helical) follow at residues 33–53, 56–76, 106–126, 132–152, 178–198, 209–229, and 233–253; these read ISPL…YVLL, ILEA…RGFN, IGSG…VALL, FYTI…GLYI, VLLF…FLVF, LGGS…PLFL, and EITN…LYLH.

Belongs to the CobS family. Requires Mg(2+) as cofactor.

The protein resides in the cell membrane. It carries out the reaction alpha-ribazole + adenosylcob(III)inamide-GDP = adenosylcob(III)alamin + GMP + H(+). It catalyses the reaction alpha-ribazole 5'-phosphate + adenosylcob(III)inamide-GDP = adenosylcob(III)alamin 5'-phosphate + GMP + H(+). The protein operates within cofactor biosynthesis; adenosylcobalamin biosynthesis; adenosylcobalamin from cob(II)yrinate a,c-diamide: step 7/7. Joins adenosylcobinamide-GDP and alpha-ribazole to generate adenosylcobalamin (Ado-cobalamin). Also synthesizes adenosylcobalamin 5'-phosphate from adenosylcobinamide-GDP and alpha-ribazole 5'-phosphate. This chain is Adenosylcobinamide-GDP ribazoletransferase, found in Saccharolobus islandicus (strain M.16.27) (Sulfolobus islandicus).